The following is a 237-amino-acid chain: 1-(5-phosphoribosyl)-5-[(5-phosphoribosylamino)methylideneamino] imidazole-4-carboxamide isomerase (237 aa).

Aspartate 8 acts as the Proton acceptor in catalysis. The active-site Proton donor is aspartate 129.

This sequence belongs to the HisA/HisF family.

Its subcellular location is the cytoplasm. The enzyme catalyses 1-(5-phospho-beta-D-ribosyl)-5-[(5-phospho-beta-D-ribosylamino)methylideneamino]imidazole-4-carboxamide = 5-[(5-phospho-1-deoxy-D-ribulos-1-ylimino)methylamino]-1-(5-phospho-beta-D-ribosyl)imidazole-4-carboxamide. Its pathway is amino-acid biosynthesis; L-histidine biosynthesis; L-histidine from 5-phospho-alpha-D-ribose 1-diphosphate: step 4/9. This chain is 1-(5-phosphoribosyl)-5-[(5-phosphoribosylamino)methylideneamino] imidazole-4-carboxamide isomerase, found in Alkaliphilus metalliredigens (strain QYMF).